Reading from the N-terminus, the 434-residue chain is Serine--tRNA ligase (434 aa).

L-serine is bound at residue 239–241 (TAE). 270-272 (RSE) is a binding site for ATP. Glu-293 provides a ligand contact to L-serine. 357–360 (EISS) is an ATP binding site. Ser-392 contributes to the L-serine binding site.

This sequence belongs to the class-II aminoacyl-tRNA synthetase family. Type-1 seryl-tRNA synthetase subfamily. In terms of assembly, homodimer. The tRNA molecule binds across the dimer.

The protein resides in the cytoplasm. It carries out the reaction tRNA(Ser) + L-serine + ATP = L-seryl-tRNA(Ser) + AMP + diphosphate + H(+). The catalysed reaction is tRNA(Sec) + L-serine + ATP = L-seryl-tRNA(Sec) + AMP + diphosphate + H(+). The protein operates within aminoacyl-tRNA biosynthesis; selenocysteinyl-tRNA(Sec) biosynthesis; L-seryl-tRNA(Sec) from L-serine and tRNA(Sec): step 1/1. In terms of biological role, catalyzes the attachment of serine to tRNA(Ser). Is also able to aminoacylate tRNA(Sec) with serine, to form the misacylated tRNA L-seryl-tRNA(Sec), which will be further converted into selenocysteinyl-tRNA(Sec). This is Serine--tRNA ligase from Cupriavidus taiwanensis (strain DSM 17343 / BCRC 17206 / CCUG 44338 / CIP 107171 / LMG 19424 / R1) (Ralstonia taiwanensis (strain LMG 19424)).